Here is a 431-residue protein sequence, read N- to C-terminus: Beta-lactamase hydrolase-like protein (431 aa).

Zn(2+) contacts are provided by H212, H214, and H286. D309 contributes to the substrate binding site.

The protein belongs to the metallo-beta-lactamase superfamily. The cofactor is Zn(2+).

Could play a role in cell adherence or biofilm development. This is Beta-lactamase hydrolase-like protein from Agrobacterium fabrum (strain C58 / ATCC 33970) (Agrobacterium tumefaciens (strain C58)).